Consider the following 245-residue polypeptide: Complement C1q subcomponent subunit A (245 aa).

An N-terminal signal peptide occupies residues 1 to 22; it reads MEGPRGWLVLCVLAISLASMVT. Residues 27-38 are compositionally biased toward basic and acidic residues; it reads RAPDGKKGEAGR. Positions 27–114 are disordered; the sequence is RAPDGKKGEA…SPGNIKDQPR (88 aa). Residues 31 to 109 form the Collagen-like domain; sequence GKKGEAGRPG…KGTKGSPGNI (79 aa). Lys33 is subject to 5-hydroxylysine. Lys33 is a glycosylation site (O-linked (Gal...) hydroxylysine). A 4-hydroxyproline mark is found at Pro39 and Pro45. Lys48 bears the 5-hydroxylysine mark. O-linked (Gal...) hydroxylysine glycosylation is present at Lys48. 4-hydroxyproline occurs at positions 54 and 57. Residue Lys67 is modified to 5-hydroxylysine. Lys67 is a glycosylation site (O-linked (Gal...) hydroxylysine). 4-hydroxyproline occurs at positions 73, 79, and 85. Lys100 bears the 5-hydroxylysine mark. A glycan (O-linked (Gal...) hydroxylysine) is linked at Lys100. The C1q domain maps to 110–245; sequence KDQPRPAFSA…FSGFLIFPSA (136 aa). N-linked (GlcNAc...) asparagine glycosylation occurs at Asn146. Cys172 and Cys190 form a disulfide bridge. Gln199 serves as a coordination point for Ca(2+).

Core component of the complement C1 complex, a calcium-dependent complex composed of 1 molecule of the C1Q subcomplex, 2 molecules of C1R and 2 molecules of C1S. The C1Q subcomplex is composed 18 subunits: 3 chains of C1QA, C1QB, and C1QC trimerize to form 6 collagen-like triple helices connected to six globular ligand-recognition modules (C1q domain). Interacts with CR1 (via Sushi 24 and Sushi 25 domains). Interacts (via C-terminus) with CD33; this interaction activates CD33 inhibitory motifs. As to quaternary structure, (Microbial infection) Interacts with Staphylococcus aureus protein Cna; this interaction results in the inhibition of the classical complement pathway. Post-translationally, O-linked glycans are assumed to be the Glc-Gal disaccharides typically found as secondary modifications of hydroxylated lysines in collagen-like domains.

It localises to the secreted. The protein localises to the cell surface. With respect to regulation, the C1Q subcomplex is inhibited by sulfated molecules, such as triterpenoid sulfates, heparan sulfate, or chondroitin sulfates. In terms of biological role, core component of the complement C1 complex, a multiprotein complex that initiates the classical pathway of the complement system, a cascade of proteins that leads to phagocytosis and breakdown of pathogens and signaling that strengthens the adaptive immune system. The classical complement pathway is initiated by the C1Q subcomplex of the C1 complex, which specifically binds IgG or IgM immunoglobulins complexed with antigens, forming antigen-antibody complexes on the surface of pathogens: C1QA, together with C1QB and C1QC, specifically recognizes and binds the Fc regions of IgG or IgM via its C1q domain. Immunoglobulin-binding activates the proenzyme C1R, which cleaves C1S, initiating the proteolytic cascade of the complement system. The C1Q subcomplex is activated by a hexamer of IgG complexed with antigens, while it is activated by a pentameric IgM. The C1Q subcomplex also recognizes and binds phosphatidylserine exposed on the surface of cells undergoing programmed cell death, possibly promoting activation of the complement system. This chain is Complement C1q subcomponent subunit A, found in Homo sapiens (Human).